Consider the following 180-residue polypeptide: Cytokinin-beta-glucosidase 2 (180 aa).

Its function is as follows. Hydrolyzes cytokinin glucosides thus liberating free cytokinins. The chain is Cytokinin-beta-glucosidase 2 (ROLC2) from Panax ginseng (Korean ginseng).